The sequence spans 984 residues: DNA polymerase (984 aa).

Positions aspartate 804–threonine 827 are bipartite nuclear localization signal. A monopartite nuclear localization signal region spans residues cysteine 939–aspartate 948. Positions arginine 943 to glutamine 969 are disordered. Residues aspartate 947–asparagine 966 are compositionally biased toward acidic residues.

It belongs to the DNA polymerase type-B family.

Its subcellular location is the host nucleus. The catalysed reaction is DNA(n) + a 2'-deoxyribonucleoside 5'-triphosphate = DNA(n+1) + diphosphate. In terms of biological role, replicates the viral genome, host DNA polymerases cannot substitute for the viral enzyme in this process. The sequence is that of DNA polymerase (POL) from Autographa californica nuclear polyhedrosis virus (AcMNPV).